The chain runs to 210 residues: Peptidyl-tRNA hydrolase (210 aa).

Tyr-30 contributes to the tRNA binding site. His-35 functions as the Proton acceptor in the catalytic mechanism. Tyr-81, Asn-83, and Asn-129 together coordinate tRNA.

The protein belongs to the PTH family. Monomer.

It is found in the cytoplasm. It carries out the reaction an N-acyl-L-alpha-aminoacyl-tRNA + H2O = an N-acyl-L-amino acid + a tRNA + H(+). Functionally, hydrolyzes ribosome-free peptidyl-tRNAs (with 1 or more amino acids incorporated), which drop off the ribosome during protein synthesis, or as a result of ribosome stalling. Catalyzes the release of premature peptidyl moieties from peptidyl-tRNA molecules trapped in stalled 50S ribosomal subunits, and thus maintains levels of free tRNAs and 50S ribosomes. The protein is Peptidyl-tRNA hydrolase of Bordetella petrii (strain ATCC BAA-461 / DSM 12804 / CCUG 43448).